A 122-amino-acid chain; its full sequence is MARIAGINIPVRKCVPFALTYIYGIGIATANVICHACEVDKRKRVSELRDEDIEKISGFIRQNYVIEGELRKEVAMNIKSLVEMGCYRGVRHRKGLPVRGQRTHTNAKTRKGRSRLPIAGKK.

The interval 97–122 (PVRGQRTHTNAKTRKGRSRLPIAGKK) is disordered.

Belongs to the universal ribosomal protein uS13 family. As to quaternary structure, part of the 30S ribosomal subunit. Forms a loose heterodimer with protein S19. Forms two bridges to the 50S subunit in the 70S ribosome.

In terms of biological role, located at the top of the head of the 30S subunit, it contacts several helices of the 16S rRNA. In the 70S ribosome it contacts the 23S rRNA (bridge B1a) and protein L5 of the 50S subunit (bridge B1b), connecting the 2 subunits; these bridges are implicated in subunit movement. Contacts the tRNAs in the A and P-sites. The protein is Small ribosomal subunit protein uS13 of Wolbachia pipientis wMel.